Here is a 515-residue protein sequence, read N- to C-terminus: Galactose/methyl galactoside import ATP-binding protein MglA (515 aa).

2 consecutive ABC transporter domains span residues 8–243 (LEMR…VGRE) and 254–499 (IPKE…AKYL). Residue 40–47 (GENGAGKS) participates in ATP binding.

It belongs to the ABC transporter superfamily. Galactose/methyl galactoside importer (TC 3.A.1.2.3) family. The complex is composed of one ATP-binding protein (MglA), two transmembrane proteins (MglC) and a solute-binding protein (MglB).

It localises to the cell membrane. The catalysed reaction is D-galactose(out) + ATP + H2O = D-galactose(in) + ADP + phosphate + H(+). The enzyme catalyses methyl beta-D-galactoside(out) + ATP + H2O = methyl beta-D-galactoside(in) + ADP + phosphate + H(+). Functionally, part of the ABC transporter complex MglABC involved in galactose/methyl galactoside import. Responsible for energy coupling to the transport system. The chain is Galactose/methyl galactoside import ATP-binding protein MglA from Clostridium perfringens (strain SM101 / Type A).